A 143-amino-acid chain; its full sequence is Putative pre-16S rRNA nuclease (143 aa).

Belongs to the YqgF nuclease family.

It localises to the cytoplasm. In terms of biological role, could be a nuclease involved in processing of the 5'-end of pre-16S rRNA. This chain is Putative pre-16S rRNA nuclease, found in Leuconostoc citreum (strain KM20).